Consider the following 89-residue polypeptide: Translation initiation factor IF-1, chloroplastic (89 aa).

An S1-like domain is found at 1 to 72 (MKKQDLIDME…TKGRIIYRLR (72 aa)).

This sequence belongs to the IF-1 family. In terms of assembly, component of the 30S ribosomal translation pre-initiation complex which assembles on the 30S ribosome in the order IF-2 and IF-3, IF-1 and N-formylmethionyl-tRNA(fMet); mRNA recruitment can occur at any time during PIC assembly.

Its subcellular location is the plastid. The protein localises to the chloroplast. Functionally, one of the essential components for the initiation of protein synthesis. Stabilizes the binding of IF-2 and IF-3 on the 30S subunit to which N-formylmethionyl-tRNA(fMet) subsequently binds. Helps modulate mRNA selection, yielding the 30S pre-initiation complex (PIC). Upon addition of the 50S ribosomal subunit IF-1, IF-2 and IF-3 are released leaving the mature 70S translation initiation complex. This chain is Translation initiation factor IF-1, chloroplastic, found in Angiopteris evecta (Mule's foot fern).